Reading from the N-terminus, the 651-residue chain is Receptor-like serine/threonine-protein kinase At4g25390 (651 aa).

A signal peptide spans 1–25 (MPSRSISAPVPVLAPAPIVSSLVPA). Residues 26 to 40 (APSGHQNKTTRIFPP) are Extracellular-facing. A glycan (N-linked (GlcNAc...) asparagine) is linked at Asn-32. Residues 41–61 (FVVAGAGAGFSLFITLSVCFC) form a helical membrane-spanning segment. Residues 62-651 (KFSRKRSSPP…PLKTTRKQRR (590 aa)) lie on the Cytoplasmic side of the membrane. Positions 66–87 (KRSSPPAENASSSPRRPSPREF) are disordered. Residues 69 to 87 (SPPAENASSSPRRPSPREF) are compositionally biased toward low complexity. Positions 99–633 (FSQANRLGQG…LKGEVNLPEL (535 aa)) constitute a Protein kinase domain. Residues 105–113 (LGQGGFGVV) and Lys-127 contribute to the ATP site. The active-site Proton acceptor is the Asp-225.

It belongs to the protein kinase superfamily. Ser/Thr protein kinase family.

The protein resides in the cell membrane. It carries out the reaction L-seryl-[protein] + ATP = O-phospho-L-seryl-[protein] + ADP + H(+). The catalysed reaction is L-threonyl-[protein] + ATP = O-phospho-L-threonyl-[protein] + ADP + H(+). This Arabidopsis thaliana (Mouse-ear cress) protein is Receptor-like serine/threonine-protein kinase At4g25390.